Reading from the N-terminus, the 855-residue chain is Putative AAA family ATPase R476 (855 aa).

The span at 1–13 (MNKRDFSELKNSE) shows a compositional bias: basic and acidic residues. A disordered region spans residues 1–37 (MNKRDFSELKNSESSEESSLVSSTETVRSSKRNKKFH). Residues 17–27 (ESSLVSSTETV) are compositionally biased toward low complexity. 610–617 (GPPGTGKT) contacts ATP.

This sequence belongs to the AAA ATPase family.

The sequence is that of Putative AAA family ATPase R476 from Acanthamoeba polyphaga mimivirus (APMV).